The chain runs to 153 residues: UPF0768 protein PB2B2.18 (153 aa).

The protein belongs to the UPF0768 family.

The chain is UPF0768 protein PB2B2.18 from Schizosaccharomyces pombe (strain 972 / ATCC 24843) (Fission yeast).